We begin with the raw amino-acid sequence, 174 residues long: FMN reductase (NADH) RutF (174 aa).

The protein belongs to the non-flavoprotein flavin reductase family. RutF subfamily.

It catalyses the reaction FMNH2 + NAD(+) = FMN + NADH + 2 H(+). Its function is as follows. Catalyzes the reduction of FMN to FMNH2 which is used to reduce pyrimidine by RutA via the Rut pathway. In Stutzerimonas stutzeri (strain A1501) (Pseudomonas stutzeri), this protein is FMN reductase (NADH) RutF.